Here is a 301-residue protein sequence, read N- to C-terminus: Zinc finger protein LEE1 (301 aa).

The disordered stretch occupies residues 1–25; it reads MDAFENMSVSNHPGGNARRNSQSAN. Over residues 7 to 25 the composition is skewed to polar residues; sequence MSVSNHPGGNARRNSQSAN. 2 positions are modified to phosphoserine: serine 21 and serine 30. C3H1-type zinc fingers lie at residues 87–114 and 123–145; these read DYSH…HSPD and PCKY…HVLP. Position 282 is a phosphoserine (serine 282).

This is Zinc finger protein LEE1 (LEE1) from Saccharomyces cerevisiae (strain ATCC 204508 / S288c) (Baker's yeast).